Here is a 76-residue protein sequence, read N- to C-terminus: Exodeoxyribonuclease 7 small subunit (76 aa).

Belongs to the XseB family. As to quaternary structure, heterooligomer composed of large and small subunits.

It localises to the cytoplasm. It catalyses the reaction Exonucleolytic cleavage in either 5'- to 3'- or 3'- to 5'-direction to yield nucleoside 5'-phosphates.. Its function is as follows. Bidirectionally degrades single-stranded DNA into large acid-insoluble oligonucleotides, which are then degraded further into small acid-soluble oligonucleotides. The polypeptide is Exodeoxyribonuclease 7 small subunit (Geobacter sulfurreducens (strain ATCC 51573 / DSM 12127 / PCA)).